The sequence spans 149 residues: Transcriptional repressor NrdR (149 aa).

Residues 3–34 (CPFCFAVDTKVIDSRLVGEGSSVRRRRQCLVC) fold into a zinc finger. The ATP-cone domain occupies 49 to 139 (PRVVKSNDVR…VYRSFEDIKE (91 aa)).

This sequence belongs to the NrdR family. Requires Zn(2+) as cofactor.

Negatively regulates transcription of bacterial ribonucleotide reductase nrd genes and operons by binding to NrdR-boxes. This Klebsiella pneumoniae (strain 342) protein is Transcriptional repressor NrdR.